A 90-amino-acid chain; its full sequence is Small ribosomal subunit protein uS19 (90 aa).

It belongs to the universal ribosomal protein uS19 family.

Protein S19 forms a complex with S13 that binds strongly to the 16S ribosomal RNA. The sequence is that of Small ribosomal subunit protein uS19 from Mesomycoplasma hyopneumoniae (strain 232) (Mycoplasma hyopneumoniae).